A 418-amino-acid chain; its full sequence is MLHPRARTMLLLSLPAVAIGIASSLILIVVMKIASVLQNLLWQRLPGTLGIAQDSPLWIIGVLTLTGIAVGLVIRFSQGHAGPDPACEPLIGAPVPPSALPGLIVALILGLAGGVSLGPEHPIMTVNIALAVAIGARLLPRVNRMEWTILASAGTIGALFGTPVAAALIFSQTLNGSSEVPLWDRLFAPLMAAAAGALTTGLFFHPHFSLPIAHYGQMEMTDILSGAIVAAIAIAAGMVAVWCLPRLHAMMHQMKNPVLVLGIGGFILGILGVIGGPVSLFKGLDEMQQMVANQAFSTSDYFLLAVIKLAALVVAAASGFRGGRIFPAVFVGVALGLMLHEHVPAVPAAITVSCAILGIVLVVTRDGWLSLFMAAVVVPNTTLLPLLCIVMLPAWLLLAGKPMMMVNRSKQQPPHDNV.

Helical transmembrane passes span leucine 10–valine 30, aspartate 54–isoleucine 74, alanine 99–proline 119, glutamate 120–proline 140, isoleucine 149–isoleucine 169, leucine 186–proline 206, isoleucine 223–cysteine 243, valine 258–valine 278, aspartate 300–phenylalanine 320, glycine 322–histidine 342, valine 343–valine 363, and leucine 371–methionine 391.

The protein belongs to the chloride channel (TC 2.A.49) family.

It localises to the cell membrane. This is Putative ion-transport protein YfeO from Escherichia coli O9:H4 (strain HS).